The sequence spans 396 residues: Anaerobic glycerol-3-phosphate dehydrogenase subunit C (396 aa).

4Fe-4S ferredoxin-type domains are found at residues 2–29 (NDTS…PGYP) and 45–76 (DGAL…GDII). [4Fe-4S] cluster contacts are provided by cysteine 9, cysteine 12, cysteine 15, cysteine 19, cysteine 56, cysteine 59, cysteine 62, and cysteine 66.

Composed of a catalytic GlpA/B dimer and of GlpC.

Its subcellular location is the cell inner membrane. Its pathway is polyol metabolism; glycerol degradation via glycerol kinase pathway; glycerone phosphate from sn-glycerol 3-phosphate (anaerobic route): step 1/1. In terms of biological role, electron transfer protein; may also function as the membrane anchor for the GlpAB dimer. This chain is Anaerobic glycerol-3-phosphate dehydrogenase subunit C (glpC), found in Escherichia coli O157:H7.